A 186-amino-acid polypeptide reads, in one-letter code: Ribosome-recycling factor (186 aa).

It belongs to the RRF family.

Its subcellular location is the cytoplasm. In terms of biological role, responsible for the release of ribosomes from messenger RNA at the termination of protein biosynthesis. May increase the efficiency of translation by recycling ribosomes from one round of translation to another. The sequence is that of Ribosome-recycling factor from Rickettsia rickettsii (strain Iowa).